A 330-amino-acid chain; its full sequence is D-lactate dehydrogenase (330 aa).

NAD(+) is bound by residues 156–157 (RI), Asp-176, 206–207 (VP), 233–235 (AAR), and Asp-259. Arg-235 is an active-site residue. Glu-264 is an active-site residue. The active-site Proton donor is His-296.

This sequence belongs to the D-isomer specific 2-hydroxyacid dehydrogenase family.

It carries out the reaction (R)-lactate + NAD(+) = pyruvate + NADH + H(+). The sequence is that of D-lactate dehydrogenase (ldhD) from Staphylococcus epidermidis (strain ATCC 35984 / DSM 28319 / BCRC 17069 / CCUG 31568 / BM 3577 / RP62A).